The following is a 101-amino-acid chain: Pore-forming peptide amoebapore C (101 aa).

Residues 1-24 (MKLFVLLCVFVLCLASQEKQQDRE) form the signal peptide. Positions 25-101 (IPVLCPVCTS…KLICGLIHAC (77 aa)) constitute a Saposin B-type domain. Cystine bridges form between cysteine 29/cysteine 101, cysteine 32/cysteine 95, and cysteine 59/cysteine 70.

Monomer. Homodimer. Hexamer; formed during insertion in the membrane.

It is found in the cytoplasmic granule. In terms of biological role, forms pores in the cell membrane of host cells. Has antibacterial activity against M.luteus, no activity against E.coli. Implicated in the cytolytic activity of the parasite. This is Pore-forming peptide amoebapore C from Entamoeba histolytica (strain ATCC 30459 / HM-1:IMSS / ABRM).